A 347-amino-acid chain; its full sequence is Protein RecA (347 aa).

Position 68-75 (68-75 (GPESSGKT)) interacts with ATP.

Belongs to the RecA family.

It is found in the cytoplasm. Its function is as follows. Can catalyze the hydrolysis of ATP in the presence of single-stranded DNA, the ATP-dependent uptake of single-stranded DNA by duplex DNA, and the ATP-dependent hybridization of homologous single-stranded DNAs. It interacts with LexA causing its activation and leading to its autocatalytic cleavage. The sequence is that of Protein RecA from Mycobacterium sp. (strain JLS).